The chain runs to 85 residues: UPF0434 protein HNE_3545 (85 aa).

Belongs to the UPF0434 family.

In Hyphomonas neptunium (strain ATCC 15444), this protein is UPF0434 protein HNE_3545.